Reading from the N-terminus, the 297-residue chain is Phosphoribosylaminoimidazole-succinocarboxamide synthase (297 aa).

This sequence belongs to the SAICAR synthetase family.

It catalyses the reaction 5-amino-1-(5-phospho-D-ribosyl)imidazole-4-carboxylate + L-aspartate + ATP = (2S)-2-[5-amino-1-(5-phospho-beta-D-ribosyl)imidazole-4-carboxamido]succinate + ADP + phosphate + 2 H(+). It functions in the pathway purine metabolism; IMP biosynthesis via de novo pathway; 5-amino-1-(5-phospho-D-ribosyl)imidazole-4-carboxamide from 5-amino-1-(5-phospho-D-ribosyl)imidazole-4-carboxylate: step 1/2. The sequence is that of Phosphoribosylaminoimidazole-succinocarboxamide synthase from Corynebacterium diphtheriae (strain ATCC 700971 / NCTC 13129 / Biotype gravis).